A 419-amino-acid polypeptide reads, in one-letter code: L-rhamnose isomerase (419 aa).

Mn(2+) contacts are provided by histidine 262, aspartate 294, and aspartate 296.

The protein belongs to the rhamnose isomerase family. In terms of assembly, homotetramer. Mn(2+) is required as a cofactor.

Its subcellular location is the cytoplasm. The enzyme catalyses L-rhamnopyranose = L-rhamnulose. It participates in carbohydrate degradation; L-rhamnose degradation; glycerone phosphate from L-rhamnose: step 1/3. In terms of biological role, catalyzes the interconversion of L-rhamnose and L-rhamnulose. In Klebsiella pneumoniae subsp. pneumoniae (strain ATCC 700721 / MGH 78578), this protein is L-rhamnose isomerase.